We begin with the raw amino-acid sequence, 312 residues long: Malate dehydrogenase (312 aa).

NAD(+)-binding positions include 10-15 (GAGNTG) and Asp-34. Positions 85 and 91 each coordinate substrate. NAD(+)-binding positions include Asn-98 and 121 to 123 (LTN). Positions 123 and 154 each coordinate substrate. His-178 acts as the Proton acceptor in catalysis.

Belongs to the LDH/MDH superfamily. MDH type 3 family.

The catalysed reaction is (S)-malate + NAD(+) = oxaloacetate + NADH + H(+). In terms of biological role, catalyzes the reversible oxidation of malate to oxaloacetate. This is Malate dehydrogenase from Staphylococcus saprophyticus subsp. saprophyticus (strain ATCC 15305 / DSM 20229 / NCIMB 8711 / NCTC 7292 / S-41).